Here is a 124-residue protein sequence, read N- to C-terminus: Small ribosomal subunit protein uS12cy (124 aa).

The protein belongs to the universal ribosomal protein uS12 family. As to quaternary structure, part of the 30S ribosomal subunit.

The protein resides in the plastid. The protein localises to the chloroplast. Functionally, with S4 and S5 plays an important role in translational accuracy. Located at the interface of the 30S and 50S subunits. This is Small ribosomal subunit protein uS12cy (rps12-B) from Olimarabidopsis pumila (Dwarf rocket).